Reading from the N-terminus, the 183-residue chain is Large ribosomal subunit protein uL6 (183 aa).

It belongs to the universal ribosomal protein uL6 family. In terms of assembly, part of the 50S ribosomal subunit.

Its function is as follows. This protein binds to the 23S rRNA, and is important in its secondary structure. It is located near the subunit interface in the base of the L7/L12 stalk, and near the tRNA binding site of the peptidyltransferase center. In Chlamydia pneumoniae (Chlamydophila pneumoniae), this protein is Large ribosomal subunit protein uL6.